The chain runs to 188 residues: Ribosome maturation factor RimM (188 aa).

The PRC barrel domain maps to 93–166 (EDEYYDHQLI…RAVIDPPPGL (74 aa)).

It belongs to the RimM family. Binds ribosomal protein uS19.

It localises to the cytoplasm. An accessory protein needed during the final step in the assembly of 30S ribosomal subunit, possibly for assembly of the head region. Essential for efficient processing of 16S rRNA. May be needed both before and after RbfA during the maturation of 16S rRNA. It has affinity for free ribosomal 30S subunits but not for 70S ribosomes. The sequence is that of Ribosome maturation factor RimM from Streptomyces coelicolor (strain ATCC BAA-471 / A3(2) / M145).